The chain runs to 181 residues: Der GTPase-activating protein YihI (181 aa).

2 disordered regions span residues 1–75 and 145–181; these read MSRK…KKIP and EPEAEEEFEDEAPVRKSRSDDDLLADFEDFDMDDYKG. A compositionally biased stretch (basic residues) spans 32–43; the sequence is RLRKKDKKRKGL. Positions 146 to 155 are enriched in acidic residues; it reads PEAEEEFEDE. Positions 156 to 165 are enriched in basic and acidic residues; sequence APVRKSRSDD. The segment covering 166-181 has biased composition (acidic residues); that stretch reads DLLADFEDFDMDDYKG.

The protein belongs to the YihI family. In terms of assembly, interacts with Der.

In terms of biological role, a GTPase-activating protein (GAP) that modifies Der/EngA GTPase function. May play a role in ribosome biogenesis. The sequence is that of Der GTPase-activating protein YihI from Vibrio vulnificus (strain YJ016).